The sequence spans 489 residues: Glucose-6-phosphate 1-dehydrogenase (489 aa).

NADP(+) is bound by residues arginine 50 and lysine 151. Substrate contacts are provided by histidine 181, lysine 185, glutamate 219, and aspartate 238. Residue histidine 243 is the Proton acceptor of the active site. Residues lysine 341 and lysine 346 each coordinate substrate.

It belongs to the glucose-6-phosphate dehydrogenase family. Homodimer.

The enzyme catalyses D-glucose 6-phosphate + NADP(+) = 6-phospho-D-glucono-1,5-lactone + NADPH + H(+). It participates in carbohydrate degradation; pentose phosphate pathway; D-ribulose 5-phosphate from D-glucose 6-phosphate (oxidative stage): step 1/3. In terms of biological role, catalyzes the oxidation of glucose 6-phosphate to 6-phosphogluconolactone. In Gluconobacter oxydans (strain 621H) (Gluconobacter suboxydans), this protein is Glucose-6-phosphate 1-dehydrogenase.